Reading from the N-terminus, the 2079-residue chain is Non-reducing polyketide synthase Dhc5 (2079 aa).

The segment at 9–246 (LLFGDVTDPW…DELNIHALQH (238 aa)) is N-terminal acylcarrier protein transacylase domain (SAT). Residues 366–798 (NDGIAIVGMA…GGNACLLLED (433 aa)) form the Ketosynthase family 3 (KS3) domain. Active-site for beta-ketoacyl synthase activity residues include Cys-543, His-678, and His-717. The segment at 895–1199 (VFVFTGQGSH…MTHSLQPKTS (305 aa)) is malonyl-CoA:ACP transacylase (MAT) domain. The active-site For acyl/malonyl transferase activity is Ser-986. The interval 1268–1414 (EPLISTCAQY…DPTRSQVEWD (147 aa)) is N-terminal hotdog fold. In terms of domain architecture, PKS/mFAS DH spans 1268–1584 (EPLISTCAQY…YQELPRATWK (317 aa)). The segment at 1304-1581 (MDGHKMQGIG…DIRYQELPRA (278 aa)) is product template (PT) domain. The interval 1435–1584 (RGHRMQPEVF…YQELPRATWK (150 aa)) is C-terminal hotdog fold. The tract at residues 1613-1639 (RELQQPSSATVPAQETTIDEPEQQEGE) is disordered. The span at 1615–1628 (LQQPSSATVPAQET) shows a compositional bias: polar residues. The 78-residue stretch at 1641 to 1718 (AAGARLFNAI…DLRKEFRANE (78 aa)) folds into the Carrier domain. O-(pantetheine 4'-phosphoryl)serine is present on Ser-1678. The interval 1721–1784 (VENPRFSATP…EQKRPVKIDD (64 aa)) is disordered. Residues 1727 to 1757 (SATPSSAEASIPSSPSSLAHPMSDSASSLSP) are compositionally biased toward low complexity. Positions 1758–1784 (SDREEALPLERQSMTKREQKRPVKIDD) are enriched in basic and acidic residues. Residues 1812-2057 (ADGTGTIATY…LSVAGDHLDL (246 aa)) are thioesterase (TE) domain. The For thioesterase activity role is filled by His-2064.

The protein operates within mycotoxin biosynthesis. Functionally, highly reducing polyketide synthase; part of the gene cluster that mediates the biosynthesis of 10,11-dehydrocurvularin, a prevalent fungal phytotoxin with heat shock response and immune-modulatory activities. The highly reducing polyketide synthase Dhc3 is responsible for biosynthesis up to the tetraketide stage. The non-reducing polyketide synthase Dhc5 then conducts four additional chain extension cycles, producing the unreduced part of the nascent octaketide from C-1 to C-8 in 10,11-dehydrocurvularin. The polypeptide is Non-reducing polyketide synthase Dhc5 (Alternaria cinerariae).